Here is a 716-residue protein sequence, read N- to C-terminus: Delta-1-pyrroline-5-carboxylate synthase 1 (716 aa).

The tract at residues 1 to 296 (MASVDPSRSF…WESSKDVSTR (296 aa)) is glutamate 5-kinase. The substrate site is built by serine 60, aspartate 157, and asparagine 176. ATP is bound by residues 196–197 (SD), 202–207 (YSGPPS), and 236–242 (RGGMTAK). Residues 297–716 (EMAVAARDCS…VYTHKSLPLQ (420 aa)) form a gamma-glutamyl phosphate reductase region.

This sequence in the N-terminal section; belongs to the glutamate 5-kinase family. The protein in the C-terminal section; belongs to the gamma-glutamyl phosphate reductase family. Expressed at high levels in leaves.

It carries out the reaction L-glutamate + ATP = L-glutamyl 5-phosphate + ADP. It catalyses the reaction L-glutamate 5-semialdehyde + phosphate + NADP(+) = L-glutamyl 5-phosphate + NADPH + H(+). Its pathway is amino-acid biosynthesis; L-proline biosynthesis; L-glutamate 5-semialdehyde from L-glutamate: step 1/2. The protein operates within amino-acid biosynthesis; L-proline biosynthesis; L-glutamate 5-semialdehyde from L-glutamate: step 2/2. Its activity is regulated as follows. Feedback regulated by proline. Its function is as follows. P5CS plays a key role in proline biosynthesis, leading to osmoregulation in plants. Involved in abiotic stress tolerance. The polypeptide is Delta-1-pyrroline-5-carboxylate synthase 1 (Oryza sativa subsp. japonica (Rice)).